The chain runs to 469 residues: Glutamate--tRNA ligase (469 aa).

Positions 11-21 (PSPTGFIHLGN) match the 'HIGH' region motif. The span at 114–131 (QREAGEKPRYDGTWRPEP) shows a compositional bias: basic and acidic residues. The disordered stretch occupies residues 114-139 (QREAGEKPRYDGTWRPEPGKVLPEPP). The 'KMSKS' region signature appears at 243 to 247 (KMSKR). Lys-246 contacts ATP.

It belongs to the class-I aminoacyl-tRNA synthetase family. Glutamate--tRNA ligase type 1 subfamily. Monomer.

It localises to the cytoplasm. It catalyses the reaction tRNA(Glu) + L-glutamate + ATP = L-glutamyl-tRNA(Glu) + AMP + diphosphate. Its function is as follows. Catalyzes the attachment of glutamate to tRNA(Glu) in a two-step reaction: glutamate is first activated by ATP to form Glu-AMP and then transferred to the acceptor end of tRNA(Glu). The chain is Glutamate--tRNA ligase from Paraburkholderia xenovorans (strain LB400).